A 92-amino-acid chain; its full sequence is PqqA binding protein (92 aa).

Belongs to the PqqD family. Monomer. Interacts with PqqE.

It participates in cofactor biosynthesis; pyrroloquinoline quinone biosynthesis. Functionally, functions as a PqqA binding protein and presents PqqA to PqqE, in the pyrroloquinoline quinone (PQQ) biosynthetic pathway. The chain is PqqA binding protein from Xanthomonas oryzae pv. oryzae (strain PXO99A).